Reading from the N-terminus, the 515-residue chain is Membrane-bound lytic murein transglycosylase F (515 aa).

Positions Met-1–Ala-32 are cleaved as a signal peptide. Positions Asp-33–Gly-269 are non-LT domain. The interval Asp-270–Asn-515 is LT domain. The active site involves Glu-314. Positions Gln-493–Asn-515 are disordered.

The protein in the N-terminal section; belongs to the bacterial solute-binding protein 3 family. This sequence in the C-terminal section; belongs to the transglycosylase Slt family.

The protein resides in the cell outer membrane. It catalyses the reaction Exolytic cleavage of the (1-&gt;4)-beta-glycosidic linkage between N-acetylmuramic acid (MurNAc) and N-acetylglucosamine (GlcNAc) residues in peptidoglycan, from either the reducing or the non-reducing ends of the peptidoglycan chains, with concomitant formation of a 1,6-anhydrobond in the MurNAc residue.. In terms of biological role, murein-degrading enzyme that degrades murein glycan strands and insoluble, high-molecular weight murein sacculi, with the concomitant formation of a 1,6-anhydromuramoyl product. Lytic transglycosylases (LTs) play an integral role in the metabolism of the peptidoglycan (PG) sacculus. Their lytic action creates space within the PG sacculus to allow for its expansion as well as for the insertion of various structures such as secretion systems and flagella. In Citrobacter koseri (strain ATCC BAA-895 / CDC 4225-83 / SGSC4696), this protein is Membrane-bound lytic murein transglycosylase F.